The chain runs to 64 residues: MPKNKTNSGAKKRFRVTGSGKIMHKRAHQTHKFEERSRSSVRRLSNDAEVSSADRKSIKKLLGK.

Residues 1-64 (MPKNKTNSGA…RKSIKKLLGK (64 aa)) are disordered.

The protein belongs to the bacterial ribosomal protein bL35 family.

This is Large ribosomal subunit protein bL35 from Beutenbergia cavernae (strain ATCC BAA-8 / DSM 12333 / CCUG 43141 / JCM 11478 / NBRC 16432 / NCIMB 13614 / HKI 0122).